A 526-amino-acid chain; its full sequence is Peptide chain release factor 3 (526 aa).

The tr-type G domain occupies 9-277 (DKRRTFAIIS…GIVEWAPIPQ (269 aa)). GTP is bound by residues 18–25 (SHPDAGKT), 86–90 (DTPGH), and 140–143 (NKLD).

This sequence belongs to the TRAFAC class translation factor GTPase superfamily. Classic translation factor GTPase family. PrfC subfamily.

Its subcellular location is the cytoplasm. Its function is as follows. Increases the formation of ribosomal termination complexes and stimulates activities of RF-1 and RF-2. It binds guanine nucleotides and has strong preference for UGA stop codons. It may interact directly with the ribosome. The stimulation of RF-1 and RF-2 is significantly reduced by GTP and GDP, but not by GMP. The chain is Peptide chain release factor 3 from Shewanella halifaxensis (strain HAW-EB4).